Reading from the N-terminus, the 462-residue chain is Sensor histidine kinase RegB (462 aa).

Topologically, residues 1 to 25 are cytoplasmic; the sequence is MILGPDGILNRDTRGDWWRLRTLIL. Residues 26–45 traverse the membrane as a helical segment; that stretch reads LRWMAVAGQLAAIVVTDWYL. The Extracellular segment spans residues 46 to 51; sequence GVRLPM. Residues 52–70 traverse the membrane as a helical segment; it reads GLCFMAVGASVIANVIATF. At 71–78 the chain is on the cytoplasmic side; the sequence is VFPQNRRL. The chain crosses the membrane as a helical span at residues 79 to 96; sequence TEFQALMILLFDLTQLSF. The Extracellular segment spans residues 97 to 103; sequence LLFLTGG. A helical transmembrane segment spans residues 104-123; that stretch reads LTNPFALLILAPVTISGVAL. The Cytoplasmic portion of the chain corresponds to 124-129; it reads DVRTTV. The helical transmembrane segment at 130–149 threads the bilayer; the sequence is ILGAIAIGLLTFTAYFHLPL. The Extracellular segment spans residues 150–164; sequence ILADGSSLSVPRMFE. The chain crosses the membrane as a helical span at residues 165 to 182; that stretch reads FGFWLAIVIGILFLGLYS. Residues 183–462 are Cytoplasmic-facing; the sequence is RRVAIEIRSM…PLGENVLIQT (280 aa). The Histidine kinase domain maps to 218–445; it reads AAAHELGTPL…IVEVIWPVDR (228 aa). Residue histidine 221 is modified to Phosphohistidine; by autocatalysis.

The protein localises to the cell inner membrane. The enzyme catalyses ATP + protein L-histidine = ADP + protein N-phospho-L-histidine.. Member of the two-component regulatory system RegB/RegA. Involved in the positive regulation of photosynthesis gene expression in response to anaerobiosis. Also involved in positive regulation of the cbbI and cbbII Calvin cycle CO2 fixation operons, as well as in regulation of expression of genes involved in alternative CO2 fixation pathways. Phosphorylates RegA/PrrA. This chain is Sensor histidine kinase RegB (regB), found in Cereibacter sphaeroides (Rhodobacter sphaeroides).